We begin with the raw amino-acid sequence, 224 residues long: Elongation factor 1-beta (224 aa).

Belongs to the EF-1-beta/EF-1-delta family. As to quaternary structure, EF-1 is composed of 4 subunits: alpha, beta (1B-alpha=beta'), delta (1B-beta), and gamma (1B-gamma).

Functionally, EF-1-beta and EF-1-beta' stimulate the exchange of GDP bound to EF-1-alpha to GTP. In Oryza sativa subsp. japonica (Rice), this protein is Elongation factor 1-beta.